A 458-amino-acid polypeptide reads, in one-letter code: Paired box protein Pax-8 (458 aa).

A DNA-binding region (paired) is located at residues G18–K144. The PAI subdomain stretch occupies residues G21 to T77. The interval K96–K144 is RED subdomain. A disordered region spans residues P198–S217.

The protein resides in the nucleus. Functionally, probable transcription factor. Involved in kidney development, acting synergistically with lhx1/lim-1 to establish the pronephric primordium in late gastrulae/early neurulae. The chain is Paired box protein Pax-8 from Xenopus tropicalis (Western clawed frog).